We begin with the raw amino-acid sequence, 215 residues long: MOB kinase activator-like 1A (215 aa).

The disordered stretch occupies residues 1–27 (MSLFGLGRNQKTFRPKKSAPSGSKGAQ). Zn(2+) contacts are provided by Cys-79, Cys-84, His-161, and His-166.

It belongs to the MOB1/phocein family. In terms of assembly, interacts with SIK1 at the plasma membrane and in the nucleus. As to expression, constitutively expressed. In 3- to 4-day-old seedlings, expression is high in the shoot apical meristem and along the vasculature in cotyledons, hypocotyls and roots. At the root tip, expression is detected in columella and lateral root cap cells as well as in the stem cell niche around the quiescent center (QC). The levels of expression decrease progressively in the meristematic zone from the root tip towards the base of the root, becoming stronger again in the elongation zone. In flowers, expression appears localized in ovules and pollen.

The protein localises to the nucleus. It localises to the cell membrane. The protein resides in the vacuole membrane. Its function is as follows. Plays a key role in regulation of cell expansion and cell division. Required for proper plant development, the correct patterning of the root meristem and the control of root growth. Involved in both sporogenesis and gametogenesis. In Arabidopsis thaliana (Mouse-ear cress), this protein is MOB kinase activator-like 1A.